The sequence spans 217 residues: Uracil-DNA glycosylase (217 aa).

D62 (proton acceptor) is an active-site residue.

This sequence belongs to the uracil-DNA glycosylase (UDG) superfamily. UNG family.

It is found in the cytoplasm. It catalyses the reaction Hydrolyzes single-stranded DNA or mismatched double-stranded DNA and polynucleotides, releasing free uracil.. Its function is as follows. Excises uracil residues from the DNA which can arise as a result of misincorporation of dUMP residues by DNA polymerase or due to deamination of cytosine. The protein is Uracil-DNA glycosylase of Streptococcus uberis (strain ATCC BAA-854 / 0140J).